The chain runs to 343 residues: Cytoplasmic tRNA 2-thiolation protein 1 (343 aa).

The protein belongs to the TtcA family. CTU1/NCS6/ATPBD3 subfamily.

The protein localises to the cytoplasm. Its pathway is tRNA modification; 5-methoxycarbonylmethyl-2-thiouridine-tRNA biosynthesis. Functionally, plays a central role in 2-thiolation of mcm(5)S(2)U at tRNA wobble positions of tRNA(Lys), tRNA(Glu) and tRNA(Gln). Directly binds tRNAs and probably acts by catalyzing adenylation of tRNAs, an intermediate required for 2-thiolation. It is unclear whether it acts as a sulfurtransferase that transfers sulfur from thiocarboxylated URM1 onto the uridine of tRNAs at wobble position. This Drosophila mojavensis (Fruit fly) protein is Cytoplasmic tRNA 2-thiolation protein 1.